The chain runs to 344 residues: Phenylalanine--tRNA ligase alpha subunit (344 aa).

A Mg(2+)-binding site is contributed by Glu269.

Belongs to the class-II aminoacyl-tRNA synthetase family. Phe-tRNA synthetase alpha subunit type 1 subfamily. Tetramer of two alpha and two beta subunits. Mg(2+) is required as a cofactor.

It is found in the cytoplasm. The enzyme catalyses tRNA(Phe) + L-phenylalanine + ATP = L-phenylalanyl-tRNA(Phe) + AMP + diphosphate + H(+). In Ralstonia pickettii (strain 12J), this protein is Phenylalanine--tRNA ligase alpha subunit.